A 158-amino-acid chain; its full sequence is Pycsar effector protein SaPycTM (158 aa).

A run of 3 helical transmembrane segments spans residues Phe-20 to Phe-40, Ile-53 to Val-73, and Val-136 to Ile-156.

It is found in the cell membrane. Functionally, pycsar (pyrimidine cyclase system for antiphage resistance) provides immunity against bacteriophage. The pyrimidine cyclase (PycC) synthesizes cyclic nucleotides in response to infection; these serve as specific second messenger signals. The signals activate the adjacent effector, leading to bacterial cell death and abortive phage infection. A clade E Pycsar system. In terms of biological role, the effector gene of a two-gene Pycsar system. Expression of this and adjacent SaPycC cytidylate cyclase (AC P0DV38) probably confers resistance to bacteriophage. The genes are probably only expressed in response to bacteriophage infection. Probably only responds to cCMP (produced by its cognate NTP cyclase), acts by impairing membrane integrity. In Staphylococcus aureus, this protein is Pycsar effector protein SaPycTM.